The following is a 440-amino-acid chain: MATHRTLLMCLGLPLFFPGALAQNHAPPGCSPDLDPLYYNLCDRSGAWGIVSEAVAGAGIITTFVLTIILVASLPFVQDTKKRSLLGTQVFFLLGTLGLFCLVFACVVKPDFSTCASRRFLFGVLFAICFSCLVAHVLSLNFLTRKNHGPRGWVIFTVALLLTLVEVIINTEWLIITLVRGGGQVSPLGNVSADSTMTSPCAIANMDFVMALIYVMLLLLTAFLGAWPTLCGRFKRWRKHGVFVLLTTVISIAIWVVWIVMYTYGNEQHHSPTWDDPTLAIALAANAWTFVLFYVIPEVSQVTKPSPEQSYQGDMYPTRGVGYETILKEQTGQSMFVENKAFSMDEPASAKRPVSPYSGYNGQLLTSVYQPTEMALMHKGPSEGAYDVILPRATANSQVMGSANSTLRAEDMYMVQSHQVATPPKDGKISQVFRNPYVWD.

Residues 1–22 form the signal peptide; it reads MATHRTLLMCLGLPLFFPGALA. The Extracellular segment spans residues 23–49; sequence QNHAPPGCSPDLDPLYYNLCDRSGAWG. The helical transmembrane segment at 50–70 threads the bilayer; that stretch reads IVSEAVAGAGIITTFVLTIIL. The Cytoplasmic portion of the chain corresponds to 71 to 84; that stretch reads VASLPFVQDTKKRS. The helical transmembrane segment at 85-105 threads the bilayer; sequence LLGTQVFFLLGTLGLFCLVFA. At 106–119 the chain is on the extracellular side; the sequence is CVVKPDFSTCASRR. The helical transmembrane segment at 120–140 threads the bilayer; sequence FLFGVLFAICFSCLVAHVLSL. Residues 141–155 are Cytoplasmic-facing; sequence NFLTRKNHGPRGWVI. A helical membrane pass occupies residues 156 to 176; the sequence is FTVALLLTLVEVIINTEWLII. Residues 177 to 207 are Extracellular-facing; that stretch reads TLVRGGGQVSPLGNVSADSTMTSPCAIANMD. Residue asparagine 190 is glycosylated (N-linked (GlcNAc...) asparagine). A helical membrane pass occupies residues 208 to 228; it reads FVMALIYVMLLLLTAFLGAWP. Residues 229–240 lie on the Cytoplasmic side of the membrane; that stretch reads TLCGRFKRWRKH. A helical transmembrane segment spans residues 241–261; it reads GVFVLLTTVISIAIWVVWIVM. Residues 262 to 278 are Extracellular-facing; that stretch reads YTYGNEQHHSPTWDDPT. Residues 279–299 form a helical membrane-spanning segment; the sequence is LAIALAANAWTFVLFYVIPEV. At 300 to 440 the chain is on the cytoplasmic side; that stretch reads SQVTKPSPEQ…QVFRNPYVWD (141 aa). A phosphoserine mark is found at serine 343, serine 382, serine 402, and serine 405. The residue at position 413 (tyrosine 413) is a Phosphotyrosine. Threonine 422 bears the Phosphothreonine mark.

It belongs to the G-protein coupled receptor 3 family.

It localises to the cell membrane. This retinoic acid-inducible G-protein coupled receptor provide evidence for a possible interaction between retinoid and G-protein signaling pathways. This Mus musculus (Mouse) protein is G-protein coupled receptor family C group 5 member C (Gprc5c).